The primary structure comprises 430 residues: Serine--tRNA ligase (430 aa).

L-serine is bound at residue 237–239; it reads TAE. 268–270 lines the ATP pocket; the sequence is RSE. An L-serine-binding site is contributed by glutamate 291. 355–358 is a binding site for ATP; it reads EISS. Serine 391 contributes to the L-serine binding site.

The protein belongs to the class-II aminoacyl-tRNA synthetase family. Type-1 seryl-tRNA synthetase subfamily. In terms of assembly, homodimer. The tRNA molecule binds across the dimer.

Its subcellular location is the cytoplasm. The enzyme catalyses tRNA(Ser) + L-serine + ATP = L-seryl-tRNA(Ser) + AMP + diphosphate + H(+). It catalyses the reaction tRNA(Sec) + L-serine + ATP = L-seryl-tRNA(Sec) + AMP + diphosphate + H(+). Its pathway is aminoacyl-tRNA biosynthesis; selenocysteinyl-tRNA(Sec) biosynthesis; L-seryl-tRNA(Sec) from L-serine and tRNA(Sec): step 1/1. Catalyzes the attachment of serine to tRNA(Ser). Is also able to aminoacylate tRNA(Sec) with serine, to form the misacylated tRNA L-seryl-tRNA(Sec), which will be further converted into selenocysteinyl-tRNA(Sec). This Yersinia enterocolitica serotype O:8 / biotype 1B (strain NCTC 13174 / 8081) protein is Serine--tRNA ligase.